A 174-amino-acid chain; its full sequence is MAAAAELSLLEKSLGLSKGNKYSAQGERQIPVLQTNNGPSLTGLTTIAAHLVKQANKEYLLGSTAEEKAIVQQWLEYRVTQVDGHSSKNDIHTLLKDLNSYLEDKVYLTGYNFTLADILLYYGLHRFIVDLTVQEKEKYLNVSRWFCHIQHYPGIRQHLSSVVFIKNRLYTNSH.

Ala2 bears the N-acetylalanine mark. The interval 2–56 (AAAAELSLLEKSLGLSKGNKYSAQGERQIPVLQTNNGPSLTGLTTIAAHLVKQAN) is N-terminal. The 124-residue stretch at 50–173 (HLVKQANKEY…FIKNRLYTNS (124 aa)) folds into the GST C-terminal domain. The interval 57 to 63 (KEYLLGS) is linker. Positions 64–152 (TAEEKAIVQQ…SRWFCHIQHY (89 aa)) are C-terminal. N6-acetyllysine is present on Lys138. Residues 153 to 169 (PGIRQHLSSVVFIKNRL) are a coiled coil.

In terms of assembly, part of a multisubunit complex that groups tRNA ligases for Arg (RARS1), Asp (DARS1), Gln (QARS1), Ile (IARS1), Leu (LARS1), Lys (KARS1), Met (MARS1) the bifunctional ligase for Glu and Pro (EPRS1) and the auxiliary subunits AIMP1/p43, AIMP2/p38 and EEF1E1/p18. Can interact simultaneously with MARS1 and EPRS1. Forms a linear complex that contains MARS1, EEF1E1, EPRS1 and AIMP2 that is at the core of the multisubunit complex. Interacts with ATM and ATR. The interaction with ATM, which takes place independently of TP53, is induced by DNA damage that may occur during genotoxic stress or cell growth. The interaction with ATR is enhanced by UV irradiation. In terms of tissue distribution, down-regulated in various cancer tissues.

The protein resides in the cytoplasm. It localises to the cytosol. The protein localises to the nucleus. In terms of biological role, positive modulator of ATM response to DNA damage. This is Eukaryotic translation elongation factor 1 epsilon-1 (EEF1E1) from Homo sapiens (Human).